The primary structure comprises 686 residues: Glycine--tRNA ligase beta subunit (686 aa).

The protein belongs to the class-II aminoacyl-tRNA synthetase family. As to quaternary structure, tetramer of two alpha and two beta subunits.

Its subcellular location is the cytoplasm. It carries out the reaction tRNA(Gly) + glycine + ATP = glycyl-tRNA(Gly) + AMP + diphosphate. The polypeptide is Glycine--tRNA ligase beta subunit (Halothermothrix orenii (strain H 168 / OCM 544 / DSM 9562)).